We begin with the raw amino-acid sequence, 1111 residues long: Isoleucine--tRNA ligase (1111 aa).

The short motif at 52-62 (PFANGLPHYGH) is the 'HIGH' region element. Residues 645–649 (KLSKR) carry the 'KMSKS' region motif. Position 648 (lysine 648) interacts with ATP.

This sequence belongs to the class-I aminoacyl-tRNA synthetase family. IleS type 2 subfamily. In terms of assembly, monomer. The cofactor is Zn(2+).

Its subcellular location is the cytoplasm. The enzyme catalyses tRNA(Ile) + L-isoleucine + ATP = L-isoleucyl-tRNA(Ile) + AMP + diphosphate. In terms of biological role, catalyzes the attachment of isoleucine to tRNA(Ile). As IleRS can inadvertently accommodate and process structurally similar amino acids such as valine, to avoid such errors it has two additional distinct tRNA(Ile)-dependent editing activities. One activity is designated as 'pretransfer' editing and involves the hydrolysis of activated Val-AMP. The other activity is designated 'posttransfer' editing and involves deacylation of mischarged Val-tRNA(Ile). This is Isoleucine--tRNA ligase from Wolbachia pipientis wMel.